Reading from the N-terminus, the 447-residue chain is N-succinylarginine dihydrolase (447 aa).

Substrate-binding positions include 19–28 (AGLSFGNEAS), N110, and 137–138 (HR). E174 is an active-site residue. R212 lines the substrate pocket. Residue H248 is part of the active site. Residues D250 and N359 each contribute to the substrate site. Residue C365 is the Nucleophile of the active site.

It belongs to the succinylarginine dihydrolase family. Homodimer.

The enzyme catalyses N(2)-succinyl-L-arginine + 2 H2O + 2 H(+) = N(2)-succinyl-L-ornithine + 2 NH4(+) + CO2. It participates in amino-acid degradation; L-arginine degradation via AST pathway; L-glutamate and succinate from L-arginine: step 2/5. In terms of biological role, catalyzes the hydrolysis of N(2)-succinylarginine into N(2)-succinylornithine, ammonia and CO(2). This is N-succinylarginine dihydrolase from Escherichia coli (strain ATCC 8739 / DSM 1576 / NBRC 3972 / NCIMB 8545 / WDCM 00012 / Crooks).